Reading from the N-terminus, the 389-residue chain is tRNA (guanine-N(7)-)-methyltransferase non-catalytic subunit TRM82 (389 aa).

WD repeat units lie at residues 44–86 (QNVP…HQLK), 134–179 (GHTS…KGFL), and 184–222 (QFVS…LITE).

This sequence belongs to the WD repeat TRM82 family. Forms a heterodimer with the catalytic subunit TRM8.

The protein localises to the nucleus. It participates in tRNA modification; N(7)-methylguanine-tRNA biosynthesis. Functionally, required for the formation of N(7)-methylguanine at position 46 (m7G46) in tRNA. In the complex, it is required to stabilize and induce conformational changes of the catalytic subunit. The chain is tRNA (guanine-N(7)-)-methyltransferase non-catalytic subunit TRM82 from Lodderomyces elongisporus (strain ATCC 11503 / CBS 2605 / JCM 1781 / NBRC 1676 / NRRL YB-4239) (Yeast).